A 156-amino-acid chain; its full sequence is Small ribosomal subunit protein uS7 (156 aa).

It belongs to the universal ribosomal protein uS7 family. Part of the 30S ribosomal subunit. Contacts proteins S9 and S11.

Functionally, one of the primary rRNA binding proteins, it binds directly to 16S rRNA where it nucleates assembly of the head domain of the 30S subunit. Is located at the subunit interface close to the decoding center, probably blocks exit of the E-site tRNA. The polypeptide is Small ribosomal subunit protein uS7 (Streptomyces griseus subsp. griseus (strain JCM 4626 / CBS 651.72 / NBRC 13350 / KCC S-0626 / ISP 5235)).